The sequence spans 294 residues: Hydroxyethylthiazole kinase (294 aa).

Met-57 lines the substrate pocket. Positions 132 and 196 each coordinate ATP. Residue Gly-223 participates in substrate binding.

Belongs to the Thz kinase family. Requires Mg(2+) as cofactor.

The catalysed reaction is 5-(2-hydroxyethyl)-4-methylthiazole + ATP = 4-methyl-5-(2-phosphooxyethyl)-thiazole + ADP + H(+). Its pathway is cofactor biosynthesis; thiamine diphosphate biosynthesis; 4-methyl-5-(2-phosphoethyl)-thiazole from 5-(2-hydroxyethyl)-4-methylthiazole: step 1/1. Its function is as follows. Catalyzes the phosphorylation of the hydroxyl group of 4-methyl-5-beta-hydroxyethylthiazole (THZ). The chain is Hydroxyethylthiazole kinase from Bifidobacterium adolescentis (strain ATCC 15703 / DSM 20083 / NCTC 11814 / E194a).